A 445-amino-acid polypeptide reads, in one-letter code: Glycine--tRNA ligase (445 aa).

Arg-97 and Glu-145 together coordinate substrate. Residues 177–179, 187–192, 262–263, and 308–311 each bind ATP; these read RNE, FRTCEF, EV, and GLTR. 192–196 is a substrate binding site; the sequence is FEQME. 304 to 308 serves as a coordination point for substrate; sequence ETSAG.

The protein belongs to the class-II aminoacyl-tRNA synthetase family. Homodimer.

The protein localises to the cytoplasm. It carries out the reaction tRNA(Gly) + glycine + ATP = glycyl-tRNA(Gly) + AMP + diphosphate. Its function is as follows. Catalyzes the attachment of glycine to tRNA(Gly). The sequence is that of Glycine--tRNA ligase from Borrelia garinii subsp. bavariensis (strain ATCC BAA-2496 / DSM 23469 / PBi) (Borreliella bavariensis).